The following is a 438-amino-acid chain: Anaerobic glycerol-3-phosphate dehydrogenase subunit B (438 aa).

This sequence belongs to the anaerobic G-3-P dehydrogenase subunit B family. Composed of a catalytic GlpA/B dimer and of membrane bound GlpC. Requires FMN as cofactor.

The enzyme catalyses a quinone + sn-glycerol 3-phosphate = dihydroxyacetone phosphate + a quinol. It participates in polyol metabolism; glycerol degradation via glycerol kinase pathway; glycerone phosphate from sn-glycerol 3-phosphate (anaerobic route): step 1/1. Conversion of glycerol 3-phosphate to dihydroxyacetone. Uses fumarate or nitrate as electron acceptor. This chain is Anaerobic glycerol-3-phosphate dehydrogenase subunit B, found in Vibrio vulnificus (strain YJ016).